Reading from the N-terminus, the 172-residue chain is MAINFEELHPQEQAELERNIFFTTLEQIKGWARSNSLWPMTFGLACCAIEMMGVGSSHYDLDRFGSFFRTSPRQSDVMIVSGTVTKKMAPIVRRLYDQMPEPKWVIAMGSCATAGGPYVNSYAVVKGVDQIVPVDVYIPGCPPNPAALIYGINKLKEKIRYEAKTGKQVTNK.

Residues cysteine 46, cysteine 47, cysteine 111, and cysteine 141 each coordinate [4Fe-4S] cluster.

The protein belongs to the complex I 20 kDa subunit family. NDH-1 is composed of 14 different subunits. Subunits NuoB, C, D, E, F, and G constitute the peripheral sector of the complex. The cofactor is [4Fe-4S] cluster.

Its subcellular location is the cell membrane. It carries out the reaction a quinone + NADH + 5 H(+)(in) = a quinol + NAD(+) + 4 H(+)(out). In terms of biological role, NDH-1 shuttles electrons from NADH, via FMN and iron-sulfur (Fe-S) centers, to quinones in the respiratory chain. The immediate electron acceptor for the enzyme in this species is believed to be a menaquinone. Couples the redox reaction to proton translocation (for every two electrons transferred, four hydrogen ions are translocated across the cytoplasmic membrane), and thus conserves the redox energy in a proton gradient. This chain is NADH-quinone oxidoreductase subunit B, found in Bacillus cytotoxicus (strain DSM 22905 / CIP 110041 / 391-98 / NVH 391-98).